The sequence spans 284 residues: 4-hydroxybenzoate octaprenyltransferase (284 aa).

8 consecutive transmembrane segments (helical) span residues 14–34 (VHQP…LWIT), 41–61 (FIVL…GCVI), 93–113 (WVFF…NNII), 134–154 (YIYL…LIVY), 166–186 (WLLF…YAMV), 209–229 (IVIG…GIVE), 233–253 (IIFY…QQVL), and 262–282 (CLWA…GIVL).

This sequence belongs to the UbiA prenyltransferase family. Mg(2+) is required as a cofactor.

The protein localises to the cell inner membrane. It catalyses the reaction all-trans-octaprenyl diphosphate + 4-hydroxybenzoate = 4-hydroxy-3-(all-trans-octaprenyl)benzoate + diphosphate. Its pathway is cofactor biosynthesis; ubiquinone biosynthesis. Its function is as follows. Catalyzes the prenylation of para-hydroxybenzoate (PHB) with an all-trans polyprenyl group. Mediates the second step in the final reaction sequence of ubiquinone-8 (UQ-8) biosynthesis, which is the condensation of the polyisoprenoid side chain with PHB, generating the first membrane-bound Q intermediate 3-octaprenyl-4-hydroxybenzoate. The chain is 4-hydroxybenzoate octaprenyltransferase from Blochmanniella floridana.